Reading from the N-terminus, the 111-residue chain is Translation initiation factor 1A 1 (111 aa).

Positions 1–28 are disordered; that stretch reads MTLADLKKPTSRASPSTEETVTRVRTPR. Residues 22 to 96 enclose the S1-like domain; the sequence is TRVRTPRREN…EKADVIWKYT (75 aa).

Belongs to the eIF-1A family.

In terms of biological role, seems to be required for maximal rate of protein biosynthesis. Enhances ribosome dissociation into subunits and stabilizes the binding of the initiator Met-tRNA(I) to 40 S ribosomal subunits. This Methanosarcina mazei (strain ATCC BAA-159 / DSM 3647 / Goe1 / Go1 / JCM 11833 / OCM 88) (Methanosarcina frisia) protein is Translation initiation factor 1A 1 (eIF1A1).